A 500-amino-acid chain; its full sequence is L-arabinose isomerase (500 aa).

Mn(2+) contacts are provided by Glu-306, Glu-333, His-350, and His-450.

This sequence belongs to the arabinose isomerase family. In terms of assembly, homohexamer. Mn(2+) serves as cofactor.

The catalysed reaction is beta-L-arabinopyranose = L-ribulose. It participates in carbohydrate degradation; L-arabinose degradation via L-ribulose; D-xylulose 5-phosphate from L-arabinose (bacterial route): step 1/3. In terms of biological role, catalyzes the conversion of L-arabinose to L-ribulose. The chain is L-arabinose isomerase from Shigella dysenteriae serotype 1 (strain Sd197).